The sequence spans 538 residues: MDVRICLLLFLISNPSSCIQETYNEESCSTVTRGYKSVLRTGWYTNVFNLEIGNVENITCNDGPSLIDTELVLTKNALRELKTVSADQVAKESRLSSPRRRRFVLGAIALGVATAAAVTAGVALAKTIRLEGEVKAIKNALRNTNEAVSTLGNGVRVLATAVNDLKEFISKKLTPAINQNKCNIADIKMAISFGQNNRRFLNVVRQFSDSAGITSAVSLDLMTDDELVRAINRMPTSSGQISLMLNNRAMVRRKGFGILIGVYDGTVVYMVQLPIFGVIETPCWRVVAAPLCRKEKGNYACILREDQGWYCTNAGSTAYYPNKDDCEVRDDYVFCDTAAGINVALEVEQCNYNISTSKYPCKVSTGRHPVSMVALTPLGGLVSCYESVSCSIGSNKVGIIKQLGKGCTHIPNNEADTITIDNTVYQLSKVVGEQRTIKGAPVVNNFNPILFPEDQFNVALDQVFESIDRSQDLIDKSNDLLGADAKSKAGIAIAIVVLVILGIFFLLAVIYYCSRVRKTKPKHDYPATTGHSSMAYVS.

The N-terminal stretch at 1-18 (MDVRICLLLFLISNPSSC) is a signal peptide. Residues 19–489 (IQETYNEESC…LLGADAKSKA (471 aa)) lie on the Extracellular side of the membrane. 7 disulfides stabilise this stretch: Cys-28–Cys-407, Cys-60–Cys-182, Cys-283–Cys-311, Cys-292–Cys-301, Cys-326–Cys-335, Cys-350–Cys-361, and Cys-384–Cys-390. Asn-57 carries N-linked (GlcNAc...) asparagine; by host glycosylation. Fusion peptide stretches follow at residues 103–124 (FVLG…GVAL) and 103–127 (FVLG…LAKT). Residues 125–153 (AKTIRLEGEVKAIKNALRNTNEAVSTLGN) adopt a coiled-coil conformation. Asn-353 carries N-linked (GlcNAc...) asparagine; by host glycosylation. Residues 459–484 (ALDQVFESIDRSQDLIDKSNDLLGAD) are a coiled coil. A helical transmembrane segment spans residues 490–510 (GIAIAIVVLVILGIFFLLAVI). The Cytoplasmic portion of the chain corresponds to 511–538 (YYCSRVRKTKPKHDYPATTGHSSMAYVS). Cys-513 is lipidated: S-palmitoyl cysteine; by host.

This sequence belongs to the paramyxoviruses fusion glycoprotein family. As to quaternary structure, homotrimer. Heterodimer with fusion protein F2; disulfide-linked. As a heterodimer with F2, interacts with host heparan sulfate. Part of a complex composed of F1, F2 and G glycoproteins. In terms of assembly, homotrimer. Heterodimer with fusion protein F1; disulfide-linked. As a heterodimer with F1, interacts with host heparan sulfate. Part of a complex composed of F1, F2 and G glycoproteins. Post-translationally, the F glycoprotein is synthesized as a F0 inactive precursor that is heavily N-glycosylated and processed.

The protein localises to the host Golgi apparatus membrane. It is found in the virion membrane. Its subcellular location is the host cell membrane. Inactive precursor that is cleaved to give rise to the mature F1 and F2 fusion glycoproteins. In terms of biological role, class I viral fusion protein. Under the current model, the protein has at least 3 conformational states: pre-fusion native state, pre-hairpin intermediate state, and post-fusion hairpin state. During viral and plasma cell membrane fusion, the coiled coil regions assume a trimer-of-hairpins structure, positioning the fusion peptide in close proximity to the C-terminal region of the ectodomain. The formation of this structure appears to drive apposition and subsequent fusion of viral and cellular membranes leading to delivery of the nucleocapsid into the cytoplasm. This fusion is pH independent and occurs at the plasma or endosomal membrane. The trimer of F1-F2 (F protein) also facilitates the attachment to host cell by binding to host heparan sulfate. Its function is as follows. Major determinant of the species specificity of RSV infection. The trimer of F1-F2 (F protein) also facilitates the attachment to host cell by binding to host heparan sulfate. This Meleagris gallopavo (Wild turkey) protein is Fusion glycoprotein F0 (F).